The following is a 281-amino-acid chain: Lectin alpha chain (281 aa).

3 N-linked (GlcNAc...) asparagine glycosylation sites follow: asparagine 35, asparagine 82, and asparagine 140.

It belongs to the leguminous lectin family. Tetramer of 2 alpha and 2 beta chains. Post-translationally, glycosylated. The beta chain is produced by partial proteolytic processing of the alpha chain.

Its function is as follows. D-galactose-binding lectin. The sequence is that of Lectin alpha chain from Lablab purpureus (Hyacinth bean).